The sequence spans 305 residues: Transmembrane epididymal protein 1A (305 aa).

Residues 4–24 (FIGHISPGLFLVFYGLYQAVI) form a helical membrane-spanning segment. Asn32 carries an N-linked (GlcNAc...) asparagine glycan. Helical transmembrane passes span 54 to 74 (IAHAGWLKVVIGSLLIVYEIS), 124 to 144 (CVLLERGATVLGVYVLLLLLV), 159 to 179 (SLLILVVFLLMLVLTAELWAP), 187 to 207 (IETFLILIMGSWLIQAAFILF), and 223 to 243 (IMFVTTFFCWHVMINALCMLG). The disordered stretch occupies residues 285–305 (EQQDKDDQAPLLSKISPCDRA).

The protein belongs to the TMEM45 family.

It is found in the membrane. In Mus musculus (Mouse), this protein is Transmembrane epididymal protein 1A.